We begin with the raw amino-acid sequence, 487 residues long: Kynureninase 1 (487 aa).

Pyridoxal 5'-phosphate contacts are provided by residues Leu-149, Thr-150, 177–180, Ser-234, Asp-263, His-266, and Tyr-288; that span reads FPSD. The residue at position 289 (Lys-289) is an N6-(pyridoxal phosphate)lysine. Pyridoxal 5'-phosphate-binding residues include Trp-329 and Asn-357.

Belongs to the kynureninase family. As to quaternary structure, homodimer. Pyridoxal 5'-phosphate serves as cofactor.

It is found in the cytoplasm. It catalyses the reaction L-kynurenine + H2O = anthranilate + L-alanine + H(+). The catalysed reaction is 3-hydroxy-L-kynurenine + H2O = 3-hydroxyanthranilate + L-alanine + H(+). Its pathway is amino-acid degradation; L-kynurenine degradation; L-alanine and anthranilate from L-kynurenine: step 1/1. It participates in cofactor biosynthesis; NAD(+) biosynthesis; quinolinate from L-kynurenine: step 2/3. Functionally, catalyzes the cleavage of L-kynurenine (L-Kyn) and L-3-hydroxykynurenine (L-3OHKyn) into anthranilic acid (AA) and 3-hydroxyanthranilic acid (3-OHAA), respectively. This Emericella nidulans (strain FGSC A4 / ATCC 38163 / CBS 112.46 / NRRL 194 / M139) (Aspergillus nidulans) protein is Kynureninase 1 (bna5-1).